The sequence spans 464 residues: Glutamate--tRNA ligase (464 aa).

A 'HIGH' region motif is present at residues 9-19 (PSPTGYLHIGG). The 'KMSKS' region motif lies at 242–246 (KISKR). An ATP-binding site is contributed by lysine 245.

It belongs to the class-I aminoacyl-tRNA synthetase family. Glutamate--tRNA ligase type 1 subfamily. Monomer.

Its subcellular location is the cytoplasm. The catalysed reaction is tRNA(Glu) + L-glutamate + ATP = L-glutamyl-tRNA(Glu) + AMP + diphosphate. Functionally, catalyzes the attachment of glutamate to tRNA(Glu) in a two-step reaction: glutamate is first activated by ATP to form Glu-AMP and then transferred to the acceptor end of tRNA(Glu). This Neisseria gonorrhoeae (strain ATCC 700825 / FA 1090) protein is Glutamate--tRNA ligase.